A 188-amino-acid chain; its full sequence is dCTP deaminase (188 aa).

DCTP-binding positions include 111-116 (KSTYAR), 135-137 (TLE), Gln156, Tyr170, and Gln180. The active-site Proton donor/acceptor is Glu137.

The protein belongs to the dCTP deaminase family. As to quaternary structure, homotrimer.

It catalyses the reaction dCTP + H2O + H(+) = dUTP + NH4(+). It functions in the pathway pyrimidine metabolism; dUMP biosynthesis; dUMP from dCTP (dUTP route): step 1/2. Its function is as follows. Catalyzes the deamination of dCTP to dUTP. This chain is dCTP deaminase, found in Pseudomonas savastanoi pv. phaseolicola (strain 1448A / Race 6) (Pseudomonas syringae pv. phaseolicola (strain 1448A / Race 6)).